Reading from the N-terminus, the 369-residue chain is Putative 2-aminoethylphosphonate import ATP-binding protein PhnT (369 aa).

Residues 19–250 (IVLDSLRVAY…PPNRFAAEFL (232 aa)) form the ABC transporter domain. 51-58 (GPSGSGKT) is a binding site for ATP.

Belongs to the ABC transporter superfamily. 2-aminoethylphosphonate importer (TC 3.A.1.11.5) family.

The protein localises to the cell inner membrane. Its function is as follows. Probably part of the PhnSTUV complex (TC 3.A.1.11.5) involved in 2-aminoethylphosphonate import. Probably responsible for energy coupling to the transport system. The polypeptide is Putative 2-aminoethylphosphonate import ATP-binding protein PhnT (phnT) (Salmonella typhimurium (strain LT2 / SGSC1412 / ATCC 700720)).